Consider the following 199-residue polypeptide: Protein-methionine-sulfoxide reductase heme-binding subunit MsrQ (199 aa).

The next 6 membrane-spanning stretches (helical) occupy residues 8–28, 54–74, 82–102, 116–136, 149–169, and 171–191; these read IAWL…WLFW, FLLA…PLLI, LWCF…ELGI, PYLT…ATST, LLHN…LWSV, and IVSP…ACRY.

This sequence belongs to the MsrQ family. In terms of assembly, heterodimer of a catalytic subunit (MsrP) and a heme-binding subunit (MsrQ). The cofactor is FMN. Requires heme b as cofactor.

It localises to the cell inner membrane. Its function is as follows. Part of the MsrPQ system that repairs oxidized periplasmic proteins containing methionine sulfoxide residues (Met-O), using respiratory chain electrons. Thus protects these proteins from oxidative-stress damage caused by reactive species of oxygen and chlorine generated by the host defense mechanisms. MsrPQ is essential for the maintenance of envelope integrity under bleach stress, rescuing a wide series of structurally unrelated periplasmic proteins from methionine oxidation. MsrQ provides electrons for reduction to the reductase catalytic subunit MsrP, using the quinone pool of the respiratory chain. This chain is Protein-methionine-sulfoxide reductase heme-binding subunit MsrQ, found in Klebsiella pneumoniae (strain 342).